The sequence spans 61 residues: Metallothionein-1 (61 aa).

Met1 carries the N-acetylmethionine modification. Residues 1–29 (MDPNCSCSTGGSCTCTSSCACKNCKCTSC) are beta. Residues Cys5, Cys7, Cys13, Cys15, Cys19, Cys21, Cys24, Cys26, Cys29, Cys33, Cys34, Cys36, Cys37, Cys41, Cys44, Cys48, Cys50, Cys57, Cys59, and Cys60 each coordinate a divalent metal cation. The tract at residues 30–61 (KKSCCSCCPVGCSKCAQGCVCKGAADKCTCCA) is alpha.

Belongs to the metallothionein superfamily. Type 1 family.

Metallothioneins have a high content of cysteine residues that bind various heavy metals; these proteins are transcriptionally regulated by both heavy metals and glucocorticoids. This is Metallothionein-1 (Mt1) from Mus musculus (Mouse).